The primary structure comprises 297 residues: uncharacterized protein (297 aa).

Residue Glu-46 is part of the active site.

It belongs to the PhzF family. Homodimer and homotetramer.

This is an uncharacterized protein from Escherichia coli (strain K12).